Consider the following 270-residue polypeptide: Dermonecrotic toxin LsaSicTox-alphaIB1av (270 aa).

The active site involves His-2. The Mg(2+) site is built by Glu-22 and Asp-24. His-38 acts as the Nucleophile in catalysis. 2 cysteine pairs are disulfide-bonded: Cys-42-Cys-48 and Cys-44-Cys-187. Residue Asp-82 coordinates Mg(2+).

It belongs to the arthropod phospholipase D family. Class II subfamily. Mg(2+) serves as cofactor. In terms of tissue distribution, expressed by the venom gland.

The protein resides in the secreted. It catalyses the reaction an N-(acyl)-sphingosylphosphocholine = an N-(acyl)-sphingosyl-1,3-cyclic phosphate + choline. The catalysed reaction is an N-(acyl)-sphingosylphosphoethanolamine = an N-(acyl)-sphingosyl-1,3-cyclic phosphate + ethanolamine. It carries out the reaction a 1-acyl-sn-glycero-3-phosphocholine = a 1-acyl-sn-glycero-2,3-cyclic phosphate + choline. The enzyme catalyses a 1-acyl-sn-glycero-3-phosphoethanolamine = a 1-acyl-sn-glycero-2,3-cyclic phosphate + ethanolamine. In terms of biological role, dermonecrotic toxins cleave the phosphodiester linkage between the phosphate and headgroup of certain phospholipids (sphingolipid and lysolipid substrates), forming an alcohol (often choline) and a cyclic phosphate. This toxin acts on sphingomyelin (SM). It may also act on ceramide phosphoethanolamine (CPE), lysophosphatidylcholine (LPC) and lysophosphatidylethanolamine (LPE), but not on lysophosphatidylserine (LPS), and lysophosphatidylglycerol (LPG). It acts by transphosphatidylation, releasing exclusively cyclic phosphate products as second products. Induces dermonecrosis, hemolysis, increased vascular permeability, edema, inflammatory response, and platelet aggregation. This is Dermonecrotic toxin LsaSicTox-alphaIB1av from Loxosceles sabina (Tucson recluse spider).